The chain runs to 325 residues: Heat-inducible transcription repressor HrcA (325 aa).

Belongs to the HrcA family.

In terms of biological role, negative regulator of class I heat shock genes (grpE-dnaK-dnaJ and groELS operons). Prevents heat-shock induction of these operons. This Staphylococcus epidermidis (strain ATCC 35984 / DSM 28319 / BCRC 17069 / CCUG 31568 / BM 3577 / RP62A) protein is Heat-inducible transcription repressor HrcA.